The chain runs to 146 residues: Hemoglobin subunit theta (146 aa).

The Globin domain occupies 2–146 (HFTAEEKSVI…VATALAHKYH (145 aa)). H63 and H92 together coordinate heme b.

The protein belongs to the globin family.

This chain is Hemoglobin subunit theta, found in Sus scrofa (Pig).